The sequence spans 192 residues: NADH dehydrogenase [ubiquinone] iron-sulfur protein 3 (192 aa).

It belongs to the complex I 30 kDa subunit family. In terms of assembly, complex I is composed of about 45 different subunits. This is a component of the iron-sulfur (IP) fragment of the enzyme.

The protein resides in the mitochondrion inner membrane. The enzyme catalyses a ubiquinone + NADH + 5 H(+)(in) = a ubiquinol + NAD(+) + 4 H(+)(out). Its function is as follows. Core subunit of the mitochondrial membrane respiratory chain NADH dehydrogenase (Complex I) that is believed to belong to the minimal assembly required for catalysis. Complex I functions in the transfer of electrons from NADH to the respiratory chain. The immediate electron acceptor for the enzyme is believed to be ubiquinone. This chain is NADH dehydrogenase [ubiquinone] iron-sulfur protein 3 (NAD9), found in Patellifolia webbiana (Patellaria webbiana).